An 88-amino-acid polypeptide reads, in one-letter code: MSEKKVERVLTGTVVSNNRNKTIAVLIERKVRHPIYKKYIKRSTKVHAHDEKNKCALGDLVRVVEAKPFSKTKHWALLEVVEKSVFVD.

It belongs to the universal ribosomal protein uS17 family. As to quaternary structure, part of the 30S ribosomal subunit.

Its function is as follows. One of the primary rRNA binding proteins, it binds specifically to the 5'-end of 16S ribosomal RNA. This is Small ribosomal subunit protein uS17 from Ruthia magnifica subsp. Calyptogena magnifica.